Consider the following 755-residue polypeptide: MTANTRHRGLPFLHRNWLKATNHWSKMGNKASSQAQKRSQSQTGDSATSRPATDGSGSQQQQNESQQEEERATKRRRISNDYDGFPLYENYASTQRALRIEVLKISHKDAPRWKNGITAMNGSGITAAPVDIRNIAQIKARCKLTIYGHRNGEQIVLHVDSQLCDIRVFKNSAGAAPMVRFANMRPFSIPEEKIFLEREDDSVFGLAKCYSVSVELESAGDPSWPPKELVPPTSDEETFYNKGLLPQRQWVLTANIADIYESRNRKSVRLRIKKHAQQDMATNFLMDMDVRWLTPISSLARAKEQAKDIQPSIVAIDPDNPIPLLVNGPAAANANGVNGQHAPKPECDTQPNGTHNEGTSAEEPAEGELTPSRSRRARQEINYNVKQLWNNAVGRETRNNSNKRRRGGAYGEDHPPSDDRSITYLLPPEQVHTDKFACLICGAENERLSQLRAHYMCHPQYDFYFEYKPKMGGYYVTVKPTAREGERDGEGLRPRVYQLGLPVKPLDLERYVEGDESWVTSRLGPENGREVMLPGRGVPKKPLRRPKRRPLLVPKTTQPLFDPLSKVQLLPGQPLPQHPIDDSWLLLKHRDNLQDFIDLRPEEKEFLQEWDAFILRRHISSEQYLPRYFLRFVREKADWLVSKRSRGEEFSKLVATLLARRVLPERVVIEATQVLNDARGRLREQGGVIEGEGEGQRKKECTARLYHDTCVDNPEQARLEGRHWKCADCRIKCQQQQQQQQQQELQQAQQLQQRS.

3 disordered regions span residues 26–79, 333–377, and 392–420; these read KMGN…RRIS, NANG…SRRA, and AVGR…SDDR. A compositionally biased stretch (low complexity) spans 30–42; sequence KASSQAQKRSQSQ. Polar residues-rich tracts occupy residues 43-57 and 349-359; these read TGDS…DGSG and TQPNGTHNEGT. Residues 411 to 420 are compositionally biased toward basic and acidic residues; that stretch reads GEDHPPSDDR. A C2H2-type zinc finger spans residues 436 to 458; that stretch reads FACLICGAENERLSQLRAHYMCH. Positions 580 to 645 are polycomb protein VEFS-Box; the sequence is IDDSWLLLKH…KADWLVSKRS (66 aa).

Belongs to the VEFS (VRN2-EMF2-FIS2-SU(Z)12) family. Component of the polycomb repressive complex 2 (PRC2) that consists of four core subunits icluding EZH2, EED, SUZ12, and RBBP4, among which EZH2 is the catalytic subunit and which minimally requires EED and SUZ12 for catalysis.

It is found in the nucleus. Component of the of the Polycomb Repressive Complex 2 (PRC2), a histone H3 lysine methyltransferase responsible for generating mono-, di-, and tri-methylation on Lys27 (H3K27me1, H3K27me2 and H3K27me3). The tri-methylated form is known to be critical in gene repression, and its proper placement is essential in defining repression patterns during development. SUZ12 is not a catalytic subunit but is required for the complex regulation of histone H3 lysine methylation by EZH2. The polypeptide is Polycomb protein SUZ12 (Chaetomium thermophilum (strain DSM 1495 / CBS 144.50 / IMI 039719) (Thermochaetoides thermophila)).